Here is a 270-residue protein sequence, read N- to C-terminus: Surfeit locus protein 4 homolog (270 aa).

6 helical membrane-spanning segments follow: residues 65-85, 93-113, 115-135, 178-198, 206-226, and 243-263; these read FLAT…CGMV, IAVG…SILW, FQFL…LAEA, LSVW…LVVL, ALIL…WWTI, and TLSV…GVSM. The short motif at 267–270 is the Di-lysine motif element; it reads KKKW.

It belongs to the SURF4 family.

It localises to the endoplasmic reticulum membrane. Endoplasmic reticulum cargo receptor that mediates the export of lipoproteins by recruiting cargos into COPII vesicles to facilitate their secretion. This is Surfeit locus protein 4 homolog from Drosophila melanogaster (Fruit fly).